The chain runs to 427 residues: DNA topoisomerase 6 subunit A (427 aa).

The 134-residue stretch at 76–209 folds into the Topo IIA-type catalytic domain; it reads LSLSSVQTEI…LNVIAAEKGV (134 aa). Catalysis depends on tyrosine 170, which acts as the O-(5'-phospho-DNA)-tyrosine intermediate. Residues glutamate 256 and aspartate 308 each contribute to the Mg(2+) site.

The protein belongs to the TOP6A family. As to quaternary structure, homodimer. Heterotetramer of two TOP6A and two TOP6B subunits. Interacts with BIN4 and RHL1. Requires Mg(2+) as cofactor. In terms of tissue distribution, highly expressed in leaves, stems, flowers and seedlings.

It localises to the nucleus. The catalysed reaction is ATP-dependent breakage, passage and rejoining of double-stranded DNA.. Its function is as follows. Component of the DNA topoisomerase VI involved in chromatin organization and progression of endoreduplication cycles. Relaxes both positive and negative superturns and exhibits a strong decatenase activity. Involved in cell-elongation processes. This Arabidopsis thaliana (Mouse-ear cress) protein is DNA topoisomerase 6 subunit A.